Consider the following 612-residue polypeptide: MIQVLLVTICLAVFPYQGSSIILGSGNVNDYEVVYPRKVTALPKGAAQPKYEDTMQYEFKVNGEPVVLHLEKNKGLFSEDYSETHYSPDGREITTYPPVEDHCYYHGRIQNDADSTASISACNGLKGHFKLQGEMYLIEPLELSDSEAHAVFKYENVEKEDEAPKMCGVTQNWESYEPIKKASQLNLTPEQQRYLNTKKYIELVIVADNVMVKKYTSNSTAIRTRIYACVNTLNLIYRAFNIHIALVGIEIWSNGDLINVTSAANVTLDLFGNWRRRVLLRHKRHDNAQLLTAIDFDGPTVGLAYGASMCDPRFATGIVQDHSKLDIMVAVTMAHELGHNLGMNHDGNQCNCGGNPCIMSATLNFEPAYQFSDCSRDEHWRYLIDNRPPCILNKPSITDIVSPPVCGNYFVEVGEECDCGLPARCQNPCCNAATCKLRPGTQCEDGECCEQCQFKGAGTECRAASSECDIAESCTGQSADCPTDDFQRNGQPCLNNNGYCYNGTCPTLDDQCISFFGSSKTVAPDVCFNLNLQGQGDFYCRRENTRIFPCAPQDKKCGRLFCVLGPTGNTISCQSTYSQSDLDIGMVDLGTKCGDGRVCNSTRQCVDVNTAY.

A signal peptide spans 1-20; the sequence is MIQVLLVTICLAVFPYQGSS. A propeptide spanning residues 21-189 is cleaved from the precursor; sequence IILGSGNVND…KKASQLNLTP (169 aa). A Peptidase M12B domain is found at 199-395; sequence KYIELVIVAD…NRPPCILNKP (197 aa). Ca(2+) is bound at residue glutamate 202. Asparagine 218 carries an N-linked (GlcNAc...) asparagine glycan. Aspartate 286 contributes to the Ca(2+) binding site. Cystine bridges form between cysteine 310-cysteine 390, cysteine 350-cysteine 374, and cysteine 352-cysteine 357. Residue histidine 335 participates in Zn(2+) binding. Residue glutamate 336 is part of the active site. Residues histidine 339 and histidine 345 each coordinate Zn(2+). Cysteine 390, asparagine 393, valine 405, asparagine 408, phenylalanine 410, glutamate 412, glutamate 415, and aspartate 418 together coordinate Ca(2+). Residues 403–489 enclose the Disintegrin domain; the sequence is PPVCGNYFVE…DCPTDDFQRN (87 aa). 14 cysteine pairs are disulfide-bonded: cysteine 406–cysteine 435, cysteine 417–cysteine 430, cysteine 419–cysteine 425, cysteine 429–cysteine 452, cysteine 443–cysteine 449, cysteine 448–cysteine 474, cysteine 461–cysteine 481, cysteine 468–cysteine 500, cysteine 493–cysteine 505, cysteine 512–cysteine 562, cysteine 527–cysteine 573, cysteine 540–cysteine 550, cysteine 557–cysteine 599, and cysteine 593–cysteine 605. Residues 467–469 carry the D/ECD-tripeptide motif; sequence ECD. The N-linked (GlcNAc...) asparagine glycan is linked to asparagine 502.

It belongs to the venom metalloproteinase (M12B) family. P-III subfamily. Zn(2+) is required as a cofactor. Expressed by the venom gland.

The protein localises to the secreted. In terms of biological role, snake venom metalloproteinase that impairs hemostasis in the envenomed animal. The chain is Zinc metalloproteinase-disintegrin-like 8 from Crotalus adamanteus (Eastern diamondback rattlesnake).